Consider the following 327-residue polypeptide: Mycothiol acetyltransferase (327 aa).

2 N-acetyltransferase domains span residues 11–159 (EPHG…VTLP) and 162–327 (VQIR…EGTS). Glu-42 is a binding site for 1D-myo-inositol 2-(L-cysteinylamino)-2-deoxy-alpha-D-glucopyranoside. 89-91 (LVI) contacts acetyl-CoA. 1D-myo-inositol 2-(L-cysteinylamino)-2-deoxy-alpha-D-glucopyranoside is bound by residues Glu-189, Lys-228, and Glu-251. Residues 255 to 257 (LGV) and 262 to 268 (QGLGLGR) each bind acetyl-CoA. Tyr-289 contributes to the 1D-myo-inositol 2-(L-cysteinylamino)-2-deoxy-alpha-D-glucopyranoside binding site. Position 294–299 (294–299 (NAPAIR)) interacts with acetyl-CoA.

The protein belongs to the acetyltransferase family. MshD subfamily. Monomer.

The enzyme catalyses 1D-myo-inositol 2-(L-cysteinylamino)-2-deoxy-alpha-D-glucopyranoside + acetyl-CoA = mycothiol + CoA + H(+). Catalyzes the transfer of acetyl from acetyl-CoA to desacetylmycothiol (Cys-GlcN-Ins) to form mycothiol. The chain is Mycothiol acetyltransferase from Acidothermus cellulolyticus (strain ATCC 43068 / DSM 8971 / 11B).